Here is a 33-residue protein sequence, read N- to C-terminus: GILDTLKNLAKTAGKGALQGLVKMASCKLSGQC.

An intrachain disulfide couples Cys27 to Cys33.

The protein belongs to the frog skin active peptide (FSAP) family. Brevinin subfamily. As to expression, expressed by the skin glands.

Its subcellular location is the secreted. Shows antibacterial activity against representative Gram-negative and Gram-positive bacterial species, and hemolytic activity. This Pelophylax lessonae (Pool frog) protein is Brevinin-2Eb.